The sequence spans 181 residues: UPF0232 protein SAV_4320 (181 aa).

Over residues 1 to 10 (MSDTPAQTPE) the composition is skewed to polar residues. 2 disordered regions span residues 1–64 (MSDT…GRDP) and 156–181 (QGPG…DTYG). A compositionally biased stretch (basic and acidic residues) spans 30-39 (AAKEQARARG).

This sequence belongs to the UPF0232 family.

This Streptomyces avermitilis (strain ATCC 31267 / DSM 46492 / JCM 5070 / NBRC 14893 / NCIMB 12804 / NRRL 8165 / MA-4680) protein is UPF0232 protein SAV_4320.